The sequence spans 144 residues: Transcription antitermination protein NusB (144 aa).

It belongs to the NusB family.

Its function is as follows. Involved in transcription antitermination. Required for transcription of ribosomal RNA (rRNA) genes. Binds specifically to the boxA antiterminator sequence of the ribosomal RNA (rrn) operons. The protein is Transcription antitermination protein NusB of Pasteurella multocida (strain Pm70).